The primary structure comprises 295 residues: Tissue factor (295 aa).

The first 32 residues, 1 to 32, serve as a signal peptide directing secretion; the sequence is METPAWPRVPRPETAVARTLLLGWVFAQVAGA. The Extracellular portion of the chain corresponds to 33 to 251; the sequence is SGTTNTVAAY…MGQEKGEFRE (219 aa). 2 consecutive short sequence motifs (WKS motif) follow at residues 46–48 and 77–79; these read WKS. Cysteines 81 and 89 form a disulfide. N-linked (GlcNAc...) asparagine glycosylation is found at Asn-156 and Asn-169. A WKS motif motif is present at residues 190–192; that stretch reads WKS. Cys-218 and Cys-241 are disulfide-bonded. The helical transmembrane segment at 252–274 threads the bilayer; it reads IFYIIGAVVFVVIILVIILAISL. Residues 275–295 are Cytoplasmic-facing; it reads HKCRKAGVGQSWKENSPLNVS. Cys-277 carries S-palmitoyl cysteine lipidation.

This sequence belongs to the tissue factor family. In terms of assembly, interacts with HSPE; the interaction, inhibited by heparin, promotes the generation of activated factor X and activates coagulation in the presence of activated factor VII. Lung, placenta and pancreas.

The protein resides in the membrane. Its subcellular location is the secreted. In terms of biological role, initiates blood coagulation by forming a complex with circulating factor VII or VIIa. The [TF:VIIa] complex activates factors IX or X by specific limited proteolysis. TF plays a role in normal hemostasis by initiating the cell-surface assembly and propagation of the coagulation protease cascade. This chain is Tissue factor (F3), found in Homo sapiens (Human).